An 847-amino-acid chain; its full sequence is Matrin-3 (847 aa).

Residue serine 2 is modified to N-acetylserine. Lysine 3 carries the post-translational modification N6-acetyllysine; alternate. Lysine 3 participates in a covalent cross-link: Glycyl lysine isopeptide (Lys-Gly) (interchain with G-Cter in SUMO2); alternate. Residues serine 4, serine 9, serine 11, serine 14, serine 22, serine 41, serine 118, and serine 126 each carry the phosphoserine modification. Residues lysine 132 and lysine 146 each participate in a glycyl lysine isopeptide (Lys-Gly) (interchain with G-Cter in SUMO2) cross-link. 2 disordered regions span residues lysine 146–proline 174 and aspartate 187–tyrosine 214. Threonine 150 bears the Phosphothreonine mark. Residue serine 157 is modified to Phosphoserine. Tyrosine 158 carries the post-translational modification Phosphotyrosine. A compositionally biased stretch (basic and acidic residues) spans arginine 160–proline 174. Residues serine 164, serine 188, and serine 195 each carry the phosphoserine modification. Residues aspartate 201–tyrosine 214 show a composition bias toward basic and acidic residues. A Phosphotyrosine modification is found at tyrosine 202. A phosphoserine mark is found at serine 206, serine 208, and serine 211. Phosphotyrosine is present on tyrosine 219. The residue at position 234 (serine 234) is a Phosphoserine. A Glycyl lysine isopeptide (Lys-Gly) (interchain with G-Cter in SUMO2) cross-link involves residue lysine 245. Residue serine 264 is modified to Phosphoserine. Lysine 269 participates in a covalent cross-link: Glycyl lysine isopeptide (Lys-Gly) (interchain with G-Cter in SUMO2). Residue serine 275 is modified to Phosphoserine. Positions proline 342 to valine 394 are disordered. In terms of domain architecture, RRM 1 spans arginine 398–lysine 473. Glycyl lysine isopeptide (Lys-Gly) (interchain with G-Cter in SUMO2) cross-links involve residues lysine 478, lysine 487, and lysine 491. The 76-residue stretch at arginine 496–lysine 571 folds into the RRM 2 domain. Phosphoserine is present on residues serine 509 and serine 511. Residue lysine 515 forms a Glycyl lysine isopeptide (Lys-Gly) (interchain with G-Cter in SUMO2) linkage. Residue lysine 522 is modified to N6-acetyllysine; alternate. Lysine 522 is covalently cross-linked (Glycyl lysine isopeptide (Lys-Gly) (interchain with G-Cter in SUMO2); alternate). The residue at position 533 (serine 533) is a Phosphoserine. Glycyl lysine isopeptide (Lys-Gly) (interchain with G-Cter in SUMO2) cross-links involve residues lysine 554 and lysine 555. At lysine 571 the chain carries N6-acetyllysine. Positions lysine 588 to proline 786 are disordered. Phosphoserine is present on residues serine 596, serine 598, serine 604, and serine 606. Basic and acidic residues predominate over residues aspartate 600–glutamine 643. Residues lysine 617 and lysine 630 each participate in a glycyl lysine isopeptide (Lys-Gly) (interchain with G-Cter in SUMO2) cross-link. Residues glutamate 653 to alanine 665 are compositionally biased toward acidic residues. Residues serine 654, serine 671, serine 673, and serine 674 each carry the phosphoserine modification. A compositionally biased stretch (low complexity) spans alanine 666–glycine 676. Threonine 679 is subject to Phosphothreonine. At serine 689 the chain carries Phosphoserine. The segment covering serine 689–glycine 704 has biased composition (basic and acidic residues). Positions alanine 710–aspartate 718 match the Nuclear localization signal motif. Glycyl lysine isopeptide (Lys-Gly) (interchain with G-Cter in SUMO2) cross-links involve residues lysine 719 and lysine 736. A Phosphothreonine modification is found at threonine 741. 3 positions are modified to phosphoserine: serine 747, serine 759, and serine 766. Residues aspartate 767–arginine 780 are compositionally biased toward basic and acidic residues. A Glycyl lysine isopeptide (Lys-Gly) (interchain with G-Cter in SUMO2) cross-link involves residue lysine 770. The Matrin-type zinc-finger motif lies at phenylalanine 801–lysine 832. Lysine 836 is subject to N6-acetyllysine; alternate. Lysine 836 participates in a covalent cross-link: Glycyl lysine isopeptide (Lys-Gly) (interchain with G-Cter in SUMO2); alternate.

In terms of assembly, part of a complex consisting of SFPQ, NONO and MATR3. Interacts with AGO1 and AGO2. Part of a complex composed at least of ASH2L, EMSY, HCFC1, HSPA8, CCAR2, MATR3, MKI67, RBBP5, TUBB2A, WDR5 and ZNF335; this complex may have a histone H3-specific methyltransferase activity. Interacts with TARDBP. Part of the HDP-RNP complex composed of at least HEXIM1, PRKDC, XRCC5, XRCC6, paraspeckle proteins (SFPQ, NONO, PSPC1, RBM14, and MATR3) and NEAT1 RNA. Interacts with FUS. Interacts with IGF2BP1; the interaction is enhanced by SEPIN14P20 peptide RBPR. Interacts with IGF2BP2 and IGF2BP3. Interacts with RBPMS.

It is found in the nucleus matrix. Functionally, may play a role in transcription or may interact with other nuclear matrix proteins to form the internal fibrogranular network. In association with the SFPQ-NONO heteromer may play a role in nuclear retention of defective RNAs. Plays a role in the regulation of DNA virus-mediated innate immune response by assembling into the HDP-RNP complex, a complex that serves as a platform for IRF3 phosphorylation and subsequent innate immune response activation through the cGAS-STING pathway. Binds to N6-methyladenosine (m6A)-containing mRNAs and contributes to MYC stability by binding to m6A-containing MYC mRNAs. May bind to specific miRNA hairpins. This chain is Matrin-3 (MATR3), found in Homo sapiens (Human).